The primary structure comprises 249 residues: Transcription repressor MYB5 (249 aa).

HTH myb-type domains follow at residues 20–72 (KMGM…MNYL) and 73–127 (RPSV…RKKL). 2 DNA-binding regions (H-T-H motif) span residues 48–72 (WRSL…MNYL) and 100–123 (WSLI…NTHL). A disordered region spans residues 133 to 180 (DPQTHKPLDANNIHKPEEEVSGGQKYPLEPISSSHTDDTTVNGGDGDS). Residues 135-150 (QTHKPLDANNIHKPEE) show a composition bias toward basic and acidic residues.

As to quaternary structure, interacts with BHLH002/EGL3/MYC146, BHLH012/MYC1 and BHLH042/TT8. Siliques.

The protein resides in the nucleus. In terms of biological role, transcription activator, when associated with BHLH002/EGL3/MYC146, BHLH012/MYC1 or BHLH042/TT8. The polypeptide is Transcription repressor MYB5 (MYB5) (Arabidopsis thaliana (Mouse-ear cress)).